We begin with the raw amino-acid sequence, 338 residues long: 3 beta-hydroxysteroid dehydrogenase type 7 (338 aa).

Residue Tyr159 is the Proton acceptor of the active site. Lys163 contributes to the NAD(+) binding site. 2 helical membrane-spanning segments follow: residues 258 to 278 (LLPY…QWLL) and 280 to 300 (PLVL…NTTF).

Belongs to the 3-beta-HSD family. High levels in liver and lung, moderate levels in spleen, brain, heart, kidney, jejunum and testis. Up-regulated in 3Y1 cells upon growth arrest.

It is found in the endoplasmic reticulum membrane. The enzyme catalyses 7alpha-hydroxycholesterol + NAD(+) = 7alpha-hydroxycholest-4-en-3-one + NADH + H(+). It catalyses the reaction 7alpha,25-dihydroxycholesterol + NAD(+) = 7alpha,25-dihydroxy-4-cholesten-3-one + NADH + H(+). It carries out the reaction (25R)-cholest-5-en-3beta,7alpha,26-triol + NAD(+) = (25R)-7alpha,26-dihydroxycholest-4-en-3-one + NADH + H(+). The catalysed reaction is (24S)-7alpha-dihydroxycholesterol + NAD(+) = (24S)-7alpha,24-dihydroxycholest-4-en-3-one + NADH + H(+). It functions in the pathway lipid metabolism; steroid biosynthesis. Functionally, the 3-beta-HSD enzymatic system plays a crucial role in the biosynthesis of all classes of hormonal steroids. HSD VII is active against four 7-alpha-hydroxylated sterols. Does not metabolize several different C(19/21) steroids as substrates. Involved in bile acid synthesis. Plays a key role in cell positioning and movement in lymphoid tissues by mediating degradation of 7-alpha,25-dihydroxycholesterol (7-alpha,25-OHC): 7-alpha,25-OHC acts as a ligand for the G protein-coupled receptor GPR183/EBI2, a chemotactic receptor for a number of lymphoid cells. In Rattus norvegicus (Rat), this protein is 3 beta-hydroxysteroid dehydrogenase type 7.